The following is a 445-amino-acid chain: Meiosis-specific serine/threonine-protein kinase mek1 (445 aa).

One can recognise an FHA domain in the interval 62 to 116; that stretch reads VSVGRSNTCNYQLLQFTASYKHFRVYSVLIDDDMDPLVYCEDQSSNGTFLNHRLI. A Protein kinase domain is found at 160-421; the sequence is NITQRLLGIG…VKQCLSHPWF (262 aa). ATP-binding positions include 166-174 and Lys189; that span reads LGIGGFSRI. The Proton acceptor role is filled by Asp281.

This sequence belongs to the protein kinase superfamily. CAMK Ser/Thr protein kinase family. CHEK2 subfamily.

The enzyme catalyses L-seryl-[protein] + ATP = O-phospho-L-seryl-[protein] + ADP + H(+). The catalysed reaction is L-threonyl-[protein] + ATP = O-phospho-L-threonyl-[protein] + ADP + H(+). Probable protein kinase required for meiotic recombination. The sequence is that of Meiosis-specific serine/threonine-protein kinase mek1 (mek1) from Schizosaccharomyces pombe (strain 972 / ATCC 24843) (Fission yeast).